A 235-amino-acid polypeptide reads, in one-letter code: Lipoprotein-releasing system ATP-binding protein LolD (235 aa).

The ABC transporter domain maps to 7-234 (LQCTNLSKRY…QQELTLMGAR (228 aa)). 43-50 (GSSGSGKS) is an ATP binding site.

It belongs to the ABC transporter superfamily. Lipoprotein translocase (TC 3.A.1.125) family. The complex is composed of two ATP-binding proteins (LolD) and two transmembrane proteins (LolC and LolE).

The protein resides in the cell inner membrane. Its function is as follows. Part of the ABC transporter complex LolCDE involved in the translocation of mature outer membrane-directed lipoproteins, from the inner membrane to the periplasmic chaperone, LolA. Responsible for the formation of the LolA-lipoprotein complex in an ATP-dependent manner. This chain is Lipoprotein-releasing system ATP-binding protein LolD, found in Pectobacterium atrosepticum (strain SCRI 1043 / ATCC BAA-672) (Erwinia carotovora subsp. atroseptica).